The following is a 137-amino-acid chain: Large ribosomal subunit protein uL16 (137 aa).

Over residues Met-1–Lys-14 the composition is skewed to basic residues. Residues Met-1–Thr-22 form a disordered region.

It belongs to the universal ribosomal protein uL16 family. As to quaternary structure, part of the 50S ribosomal subunit.

In terms of biological role, binds 23S rRNA and is also seen to make contacts with the A and possibly P site tRNAs. This Dechloromonas aromatica (strain RCB) protein is Large ribosomal subunit protein uL16.